Consider the following 63-residue polypeptide: Small ribosomal subunit protein eS27 (63 aa).

Zn(2+) contacts are provided by cysteine 18, cysteine 21, cysteine 37, and cysteine 40. The C4-type zinc finger occupies 18-40 (CIDCGNEQIVFSHPATKVRCLIC).

This sequence belongs to the eukaryotic ribosomal protein eS27 family. In terms of assembly, part of the 30S ribosomal subunit. Zn(2+) serves as cofactor.

The sequence is that of Small ribosomal subunit protein eS27 from Pyrococcus furiosus (strain ATCC 43587 / DSM 3638 / JCM 8422 / Vc1).